The sequence spans 513 residues: MSDKLIIFDTTLRDGEQSPGASMTKEEKIRIAKQLERLKVDVIEAGFAASSNGDFEAIRAIAQSVKDSRICSLARANDRDISRAAEALKPAGQFRIHTFIATSALHMEKKLRMTPDQVYEQARLAVRFARQFTDDIEFSPEDGSRSDMDFLCRVLEGVIAEGATTINLPDTVGYAVPEGYAALIRSVRERIPNSDKAIWSVHCHNDLGMAVANSLAAVKLGGARQIECTINGLGERAGNTSLEEVVMAVKTRRDYFNLDVGVDTTQIVPASKLVSQITGFVVQPNKAVVGANAFAHASGIHQDGVLKARDTYEIMRAEDVGWTANKIVLGKLSGRNAFKQRLQELGIELDSEAELNAAFTRFKELADQKAEIFDEDIVAIVSNEAQHAEGEHFRFVSLSQRSETGERPHARIVFVADGKEVTGEAEGNGPVDATLNAIESKVASGAEQLLYSVNAITTGTQAQGEVTVRLSKSGRIVNGVGTDPDIVAASAKAYLAALNKLQDKSSEKLNPQI.

In terms of domain architecture, Pyruvate carboxyltransferase spans 5 to 268 (LIIFDTTLRD…DVGVDTTQIV (264 aa)). 4 residues coordinate Mn(2+): Asp14, His202, His204, and Asn239. The regulatory domain stretch occupies residues 394-513 (RFVSLSQRSE…KSSEKLNPQI (120 aa)).

Belongs to the alpha-IPM synthase/homocitrate synthase family. LeuA type 1 subfamily. As to quaternary structure, homodimer. Requires Mn(2+) as cofactor.

The protein localises to the cytoplasm. It catalyses the reaction 3-methyl-2-oxobutanoate + acetyl-CoA + H2O = (2S)-2-isopropylmalate + CoA + H(+). It participates in amino-acid biosynthesis; L-leucine biosynthesis; L-leucine from 3-methyl-2-oxobutanoate: step 1/4. Functionally, catalyzes the condensation of the acetyl group of acetyl-CoA with 3-methyl-2-oxobutanoate (2-ketoisovalerate) to form 3-carboxy-3-hydroxy-4-methylpentanoate (2-isopropylmalate). The polypeptide is 2-isopropylmalate synthase (Ralstonia nicotianae (strain ATCC BAA-1114 / GMI1000) (Ralstonia solanacearum)).